We begin with the raw amino-acid sequence, 214 residues long: Non-structural protein NP-1 (214 aa).

Disordered stretches follow at residues 1-85 and 192-214; these read MSSE…TRTN and ESEE…NASN. The span at 33–43 shows a compositional bias: basic residues; the sequence is SRSRSPIRRHG. Basic and acidic residues predominate over residues 44–55; it reads EKNLEYAHHNNQ. A compositionally biased stretch (polar residues) spans 56–71; it reads DNRQSSYTASKTSDQA. Residues 192 to 201 are compositionally biased toward acidic residues; the sequence is ESEEVTDEEM.

Belongs to the Bocaparvovirus Non-structural protein NP-1 family.

The protein resides in the host nucleus. Its function is as follows. Required for the expression of the capsid proteins. Performs the splicing and internal polyadenylation of the viral capsid-encoding mRNA precursor, which allows its maturation and expression. Transactivates the viral promoter. The chain is Non-structural protein NP-1 (NP1) from Human bocavirus 4 (HBoV4).